The following is a 493-amino-acid chain: Cytoplasmic tRNA 2-thiolation protein 2 (493 aa).

Serine 489 carries the post-translational modification Phosphoserine.

The protein belongs to the CTU2/NCS2 family. Interacts with NCS6 and URM1. May act by forming a heterodimer with NCS6.

It localises to the cytoplasm. The protein operates within tRNA modification; 5-methoxycarbonylmethyl-2-thiouridine-tRNA biosynthesis. Its function is as follows. Plays a central role in 2-thiolation of mcm(5)S(2)U at tRNA wobble positions of tRNA(Lys), tRNA(Glu) and tRNA(Gln). May act by forming a heterodimer with NCS6 that ligates sulfur from thiocarboxylated URM1 onto the uridine of tRNAs at wobble position. Prior mcm(5) tRNA modification by the elongator complex is required for 2-thiolation. May also be involved in protein urmylation and in invasive and pseudohyphal growth. Inhibits replication of Brome mosaic virus. The protein is Cytoplasmic tRNA 2-thiolation protein 2 of Saccharomyces cerevisiae (strain ATCC 204508 / S288c) (Baker's yeast).